A 148-amino-acid chain; its full sequence is Cystatin-C (148 aa).

The signal sequence occupies residues 1 to 28; sequence MARSLGVPLLLLAALVVALALAVSPAAG. A Secondary area of contact motif is present at residues 83–87; it reads QIVSG. Disulfide bonds link Cys-101–Cys-111 and Cys-125–Cys-145.

It belongs to the cystatin family.

The protein localises to the secreted. This is a thiol proteinase inhibitor. The chain is Cystatin-C (CST3) from Oryctolagus cuniculus (Rabbit).